A 93-amino-acid polypeptide reads, in one-letter code: DNA/RNA-binding protein Alba (93 aa).

Residue Lys11 is modified to N6-acetyllysine.

The protein belongs to the histone-like Alba family. Acetylated. Acetylation at Lys-11 decreases DNA-binding affinity.

Its subcellular location is the cytoplasm. The protein localises to the chromosome. Its function is as follows. Binds double-stranded DNA tightly but without sequence specificity. Involved in DNA compaction. In Pyrococcus horikoshii (strain ATCC 700860 / DSM 12428 / JCM 9974 / NBRC 100139 / OT-3), this protein is DNA/RNA-binding protein Alba.